Here is a 747-residue protein sequence, read N- to C-terminus: MPLFKLPAEEKQIDDAMRNFAEKVFASEVKDEGGRQEISPFDVDEICPISHHEMQAHIFHLETLSTSTEARRKKRFQGRKTVNLSIPLSETSSTKLSHIDEYISSSPTYQTVPDFQRVQITGDYASGVTVEDFEIVCKGLYRALCIREKYMQKSFQRFPKTPSKYLRNIDGEAWVANESFYPVFTPPVKKGEDPFRTDNLPENLGYHLKMKDGVVYVYPNEAAVSKDEPKPLPYPNLDTFLDDMNFLLALIAQGPVKTYTHRRLKFLSSKFQVHQMLNEMDELKELKNNPHRDFYNCRKVDTHIHAAACMNQKHLLRFIKKSYQIDADRVVYSTKEKNLTLKELFAKLKMHPYDLTVDSLDVHAGRQTFQRFDKFNDKYNPVGASELRDLYLKTDNYINGEYFATIIKEVGADLVEAKYQHAEPRLSIYGRSPDEWSKLSSWFVCNRIHCPNMTWMIQVPRIYDVFRSKNFLPHFGKMLENIFMPVFEATINPQADPELSVFLKHITGFDSVDDESKHSGHMFSSKSPKPQEWTLEKNPSYTYYAYYMYANIMVLNSLRKERGMNTFLFRPHCGEAGALTHLMTAFMIADDISHGLNLKKSPVLQYLFFLAQIPIAMSPLSNNSLFLEYAKNPFLDFLQKGLMISLSTDDPMQFHFTKEPLMEEYAIAAQVFKLSTCDMCEVARNSVLQCGISHEEKVKFLGDNYLEEGPAGNDIRRTNVAQIRMAYRYETWCYELNLIAEGLKSTE.

The residue at position 81 (Thr-81) is a Phosphothreonine. At Ser-85 the chain carries Phosphoserine. Phosphotyrosine is present on Tyr-216. Residues His-303 and His-305 each coordinate Zn(2+). Substrate contacts are provided by residues His-305 and 374 to 379; that span reads KFNDKY. Position 441 is a phosphoserine (Ser-441). His-572 is a Zn(2+) binding site. Position 575 (Glu-575) interacts with substrate. The Proton acceptor role is filled by His-594. Residue Asp-649 coordinates Zn(2+). 650 to 653 contributes to the substrate binding site; the sequence is DPMQ.

It belongs to the metallo-dependent hydrolases superfamily. Adenosine and AMP deaminases family. In terms of assembly, homotetramer. Zn(2+) is required as a cofactor.

The enzyme catalyses AMP + H2O + H(+) = IMP + NH4(+). It participates in purine metabolism; IMP biosynthesis via salvage pathway; IMP from AMP: step 1/1. Its function is as follows. AMP deaminase plays a critical role in energy metabolism. This Homo sapiens (Human) protein is AMP deaminase 1.